The following is a 74-amino-acid chain: Putative defensin-like protein 12 (74 aa).

Positions 1–26 are cleaved as a signal peptide; sequence MAKPCAAFLVFLCLSMLILSIPDISC. 3 cysteine pairs are disulfide-bonded: Cys26/Cys50, Cys33/Cys59, and Cys39/Cys61.

The protein belongs to the DEFL family.

It localises to the secreted. The protein is Putative defensin-like protein 12 of Arabidopsis thaliana (Mouse-ear cress).